The primary structure comprises 686 residues: X-linked interleukin-1 receptor accessory protein-like 2 (686 aa).

Residues 1 to 16 (MKPPFLLALVVCSVVS) form the signal peptide. The Extracellular segment spans residues 17–354 (TNLKMVSKRN…LLRKKDLIYK (338 aa)). One can recognise an Ig-like C2-type 1 domain in the interval 18 to 132 (NLKMVSKRNS…YCMKVSMSLT (115 aa)). Cys-53 and Cys-116 are oxidised to a cystine. N-linked (GlcNAc...) asparagine glycans are attached at residues Asn-63, Asn-120, Asn-136, Asn-211, and Asn-328. 2 Ig-like C2-type domains span residues 141 to 232 (CYNS…LKVT) and 239 to 347 (PPKP…VLLR). 2 disulfides stabilise this stretch: Cys-162–Cys-214 and Cys-265–Cys-331. Residues 355–375 (IELAGGLGAIFLLLVLLVVIY) form a helical membrane-spanning segment. Residues 376–686 (KCYNIELMLF…KELSFTSDIW (311 aa)) lie on the Cytoplasmic side of the membrane. One can recognise a TIR domain in the interval 400–556 (KEYDAYLSYT…KFWKHLVYEM (157 aa)). Glu-488 is a catalytic residue.

This sequence belongs to the interleukin-1 receptor family. In terms of tissue distribution, detected at low levels in fetal and adult brain, in particular in the frontal lobe, temporal lobe and cerebellum. Detected at very low levels in skin, liver, fetal ovary and in placenta.

Its subcellular location is the membrane. The enzyme catalyses NAD(+) + H2O = ADP-D-ribose + nicotinamide + H(+). The sequence is that of X-linked interleukin-1 receptor accessory protein-like 2 (IL1RAPL2) from Homo sapiens (Human).